We begin with the raw amino-acid sequence, 356 residues long: Dynein regulatory complex protein 10 (356 aa).

The stretch at 126–167 (SNREFFEEVRDREERAVAEQEQLKQKLKLQRVELQKAAGTIQ) forms a coiled coil. Positions 173-209 (ARGEVSEVQSSTQQSRAAIEGSARAQSEADKSSFQSD) are disordered. The segment covering 178–187 (SEVQSSTQQS) has biased composition (low complexity). Positions 197-287 (AQSEADKSSF…LRQLQEYNSG (91 aa)) form a coiled coil. The region spanning 319-348 (QNHAARVIQSYWRGFKKAREAAKKKAKKLE) is the IQ domain.

It belongs to the DRC10 family. As to quaternary structure, component of the nexin-dynein regulatory complex (N-DRC).

The protein localises to the cytoplasm. The protein resides in the cytoskeleton. Its subcellular location is the flagellum axoneme. Component of the nexin-dynein regulatory complex (N-DRC), a key regulator of ciliary/flagellar motility which maintains the alignment and integrity of the distal axoneme and regulates microtubule sliding in motile axonemes. The polypeptide is Dynein regulatory complex protein 10 (Chlamydomonas reinhardtii (Chlamydomonas smithii)).